The chain runs to 614 residues: Phosphomethylpyrimidine synthase (614 aa).

Residues Asn226, Met255, Tyr284, His320, 340–342 (SRG), 381–384 (DGLR), and Glu420 contribute to the substrate site. Position 424 (His424) interacts with Zn(2+). Residue Tyr447 participates in substrate binding. A Zn(2+)-binding site is contributed by His488. The [4Fe-4S] cluster site is built by Cys568, Cys571, and Cys576.

The protein belongs to the ThiC family. As to quaternary structure, homodimer. [4Fe-4S] cluster is required as a cofactor.

It carries out the reaction 5-amino-1-(5-phospho-beta-D-ribosyl)imidazole + S-adenosyl-L-methionine = 4-amino-2-methyl-5-(phosphooxymethyl)pyrimidine + CO + 5'-deoxyadenosine + formate + L-methionine + 3 H(+). The protein operates within cofactor biosynthesis; thiamine diphosphate biosynthesis. In terms of biological role, catalyzes the synthesis of the hydroxymethylpyrimidine phosphate (HMP-P) moiety of thiamine from aminoimidazole ribotide (AIR) in a radical S-adenosyl-L-methionine (SAM)-dependent reaction. This chain is Phosphomethylpyrimidine synthase, found in Acidovorax sp. (strain JS42).